Consider the following 505-residue polypeptide: L-carnitine/gamma-butyrobetaine antiporter (505 aa).

The next 12 membrane-spanning stretches (helical) occupy residues 10–30, 50–70, 92–112, 143–163, 195–215, 231–251, 263–283, 316–336, 347–367, 403–423, 446–466, and 475–495; these read IEPKVFFPPLIIVGILCWLTV, IWGWAFEWYMVVMLIGWFWLV, IFMMFASCTSAAVLFWGSIEI, GPLPWATYSFLSVAFAYFFFV, FYLVALIFAMGTSLGLATPLV, LDAIIITCWIILNAICVACGL, SYLSFLMLGWVFIVSGASFIM, WTVFYWAWWVIYAIQMSIFLA, LCFGMVLGLTASTWILWTVLG, LSTATMWGFFILCFIATVTLI, LLVRIGWSVLVGIIGIVLLAL, and AIIAGGCPLFFVNIMVTLSFI.

It belongs to the BCCT transporter (TC 2.A.15) family. CaiT subfamily. Homotrimer.

The protein localises to the cell inner membrane. It carries out the reaction 4-(trimethylamino)butanoate(in) + (R)-carnitine(out) = 4-(trimethylamino)butanoate(out) + (R)-carnitine(in). It functions in the pathway amine and polyamine metabolism; carnitine metabolism. In terms of biological role, catalyzes the exchange of L-carnitine for gamma-butyrobetaine. The chain is L-carnitine/gamma-butyrobetaine antiporter from Salmonella arizonae (strain ATCC BAA-731 / CDC346-86 / RSK2980).